Reading from the N-terminus, the 596-residue chain is Putative terpenoid synthase 5 (596 aa).

4 residues coordinate Mg(2+): aspartate 349, aspartate 353, asparagine 481, and aspartate 489. Positions 349 to 353 (DDTCD) match the DDXXD motif motif.

This sequence belongs to the terpene synthase family. Tpsa subfamily. Mg(2+) serves as cofactor. Requires Mn(2+) as cofactor.

Its subcellular location is the cytoplasm. Its pathway is secondary metabolite biosynthesis; terpenoid biosynthesis. The sequence is that of Putative terpenoid synthase 5 (TPS05) from Arabidopsis thaliana (Mouse-ear cress).